Reading from the N-terminus, the 2871-residue chain is Fibrillin-1 (2871 aa).

An N-terminal signal peptide occupies residues M1–G24. A propeptide spanning residues A25 to R44 is cleaved from the precursor. Positions R45 to I81 are fibrillin unique N-terminal (FUN) domain. The segment at R45–T450 is N-terminal domain. 11 cysteine pairs are disulfide-bonded: C59–C68, C67–C80, C85–C94, C89–C100, C102–C111, C119–C129, C123–C134, C136–C145, C150–C160, C154–C166, and C168–C177. EGF-like domains follow at residues I81–G112, S115–G146, and Q147–E178. The interaction with MFAP4 stretch occupies residues C119 to I329. Residues G184 to I236 form the TB 1 domain. The interval C195–C221 is hybrid domain 1. The 42-residue stretch at D246–E287 folds into the EGF-like 4; calcium-binding domain. 6 cysteine pairs are disulfide-bonded: C250–C262, C257–C271, C273–C286, C292–C304, C299–C313, and C315–C328. S268 carries O-linked (Glc) serine glycosylation. Residues D288 to I329 form the EGF-like 5; calcium-binding domain. The region spanning G334–C389 is the TB 2 domain. Residue N448 is glycosylated (N-linked (GlcNAc...) asparagine). The 41-residue stretch at V449–I489 folds into the EGF-like 6 domain. 15 disulfides stabilise this stretch: C453-C465, C460-C474, C476-C488, C494-C504, C499-C513, C515-C528, C534-C546, C541-C555, C557-C570, C576-C587, C582-C596, C598-C611, C617-C628, C623-C637, and C639-C652. An O-linked (Glc) serine glycan is attached at S471. Residues D490–R529 form the EGF-like 7; calcium-binding domain. An O-linked (Glc) serine glycan is attached at S510. Positions D530–E571 constitute an EGF-like 8; calcium-binding domain. The 41-residue stretch at D572–K612 folds into the EGF-like 9; calcium-binding domain. Residues D613 to V653 form the EGF-like 10; calcium-binding domain. The TB 3 domain occupies S659 to C711. The region spanning D723 to V764 is the EGF-like 11; calcium-binding domain. 16 cysteine pairs are disulfide-bonded: C727/C739, C734/C748, C750/C763, C769/C781, C776/C790, C792/C805, C811/C821, C816/C830, C832/C845, C853/C875, C862/C887, C876/C890, C896/C908, C914/C926, C921/C935, and C937/C950. Residues D765 to E806 form the EGF-like 12; calcium-binding domain. The EGF-like 13; calcium-binding domain maps to D807–I846. In terms of domain architecture, TB 4 spans G851–R902. Residues C862–C887 form a hybrid domain 2 region. Residues D910–L951 enclose the EGF-like 14; calcium-binding domain. The TB 5 domain maps to E956 to C1008. The 42-residue stretch at D1028 to T1069 folds into the EGF-like 15; calcium-binding domain. 46 cysteine pairs are disulfide-bonded: C1032–C1044, C1039–C1053, C1055–C1068, C1074–C1086, C1081–C1095, C1097–C1111, C1117–C1129, C1124–C1138, C1140–C1153, C1159–C1171, C1166–C1180, C1182–C1195, C1201–C1212, C1208–C1221, C1223–C1236, C1242–C1254, C1249–C1263, C1265–C1278, C1284–C1296, C1291–C1305, C1307–C1320, C1326–C1339, C1333–C1348, C1350–C1361, C1367–C1380, C1374–C1389, C1391–C1402, C1408–C1420, C1415–C1429, C1431–C1444, C1450–C1461, C1456–C1470, C1472–C1485, C1491–C1502, C1497–C1511, C1513–C1526, C1534–C1562, C1549–C1574, C1563–C1577, C1564–C1589, C1610–C1622, C1617–C1631, C1633–C1646, C1652–C1663, C1658–C1672, and C1674–C1687. Residue N1067 is glycosylated (N-linked (GlcNAc...) asparagine). An EGF-like 16; calcium-binding domain is found at D1070 to M1112. Residues D1113–I1154 enclose the EGF-like 17; calcium-binding domain. An O-linked (Glc) serine glycan is attached at S1135. A glycan (N-linked (GlcNAc...) asparagine) is linked at N1149. The EGF-like 18; calcium-binding domain maps to D1155–V1196. An EGF-like 19; calcium-binding domain is found at D1197–T1237. S1218 carries O-linked (Glc) serine glycosylation. An EGF-like 20; calcium-binding domain is found at D1238–V1279. The region spanning D1280–T1321 is the EGF-like 21; calcium-binding domain. S1302 carries an O-linked (Glc) serine glycan. The EGF-like 22; calcium-binding domain maps to D1322 to T1362. S1345 carries an O-linked (Glc) serine glycan. One can recognise an EGF-like 23; calcium-binding domain in the interval D1363 to T1403. An N-linked (GlcNAc...) asparagine glycan is attached at N1369. S1386 carries O-linked (Glc) serine glycosylation. The region spanning D1404–E1445 is the EGF-like 24; calcium-binding domain. One can recognise an EGF-like 25; calcium-binding domain in the interval D1446 to T1486. N-linked (GlcNAc...) asparagine glycosylation occurs at N1484. In terms of domain architecture, EGF-like 26; calcium-binding spans D1487–V1527. An O-linked (Glc) serine glycan is attached at S1508. Positions D1528–R2731 are C-terminal domain. In terms of domain architecture, TB 6 spans G1532–C1589. A Cell attachment site motif is present at residues R1541–D1543. N1581 carries N-linked (GlcNAc...) asparagine glycosylation. The EGF-like 27; calcium-binding domain occupies D1606–D1647. S1628 is a glycosylation site (O-linked (Glc) serine). The region spanning D1648–M1688 is the EGF-like 28; calcium-binding domain. N1669 is a glycosylation site (N-linked (GlcNAc...) asparagine). Positions S1693–C1748 constitute a TB 7 domain. Residues N1703 and N1713 are each glycosylated (N-linked (GlcNAc...) asparagine). In terms of domain architecture, EGF-like 29; calcium-binding spans D1766–E1807. 40 disulfides stabilise this stretch: C1770–C1782, C1777–C1791, C1793–C1806, C1812–C1824, C1818–C1833, C1835–C1847, C1853–C1865, C1860–C1874, C1876–C1889, C1895–C1905, C1900–C1914, C1916–C1928, C1934–C1947, C1942–C1956, C1958–C1971, C1977–C1989, C1984–C1998, C2000–C2011, C2017–C2029, C2024–C2038, C2040–C2053, C2061–C2083, C2070–C2096, C2084–C2099, C2085–C2111, C2131–C2142, C2137–C2151, C2153–C2164, C2170–C2181, C2176–C2190, C2192–C2204, C2210–C2221, C2217–C2230, C2232–C2245, C2251–C2265, C2258–C2274, C2276–C2289, C2295–C2307, C2302–C2316, and C2318–C2331. The EGF-like 30; calcium-binding domain maps to D1808 to N1848. S1830 is a glycosylation site (O-linked (Glc) serine). Residues D1849–L1890 enclose the EGF-like 31; calcium-binding domain. O-linked (Glc) serine glycosylation occurs at S1871. The region spanning D1891–I1929 is the EGF-like 32; calcium-binding domain. Residue N1902 is glycosylated (N-linked (GlcNAc...) asparagine). S1911 carries O-linked (Glc) serine glycosylation. The 43-residue stretch at D1930 to V1972 folds into the EGF-like 33; calcium-binding domain. S1953 carries an O-linked (Glc) serine glycan. An EGF-like 34; calcium-binding domain is found at D1973 to E2012. An EGF-like 35; calcium-binding domain is found at D2013–Q2054. O-linked (Glc) serine glycosylation is present at S2035. Residues S2059–C2111 form the TB 8 domain. N2077 is a glycosylation site (N-linked (GlcNAc...) asparagine). Residues D2127–V2165 enclose the EGF-like 36; calcium-binding domain. O-linked (Glc) serine glycosylation is present at S2148. An EGF-like 37; calcium-binding domain is found at D2166–E2205. N2178 is a glycosylation site (N-linked (GlcNAc...) asparagine). Residues D2206–K2246 form the EGF-like 38; calcium-binding domain. S2227 carries O-linked (Glc) serine glycosylation. The region spanning D2247–V2290 is the EGF-like 39; calcium-binding domain. The region spanning D2291–L2332 is the EGF-like 40; calcium-binding domain. S2313 carries an O-linked (Glc) serine glycan. The TB 9 domain maps to G2337–C2390. An EGF-like 41; calcium-binding domain is found at D2402–V2443. Disulfide bonds link C2406-C2418, C2413-C2427, C2429-C2442, C2448-C2459, C2455-C2468, C2470-C2483, C2489-C2500, C2496-C2509, C2511-C2522, C2528-C2541, C2535-C2550, C2552-C2565, C2571-C2581, C2577-C2590, C2592-C2605, C2611-C2622, C2617-C2631, C2633-C2646, C2652-C2663, C2659-C2672, and C2674-C2686. Residues D2444 to K2484 enclose the EGF-like 42; calcium-binding domain. S2465 is a glycosylation site (O-linked (Glc) serine). The region spanning D2485 to I2523 is the EGF-like 43; calcium-binding domain. The EGF-like 44; calcium-binding domain maps to D2524 to E2566. O-linked (Glc) serine glycosylation occurs at S2547. Residues D2567–V2606 enclose the EGF-like 45; calcium-binding domain. The EGF-like 46; calcium-binding domain occupies D2607–Q2647. S2628 is a glycosylation site (O-linked (Glc) serine). An EGF-like 47; calcium-binding domain is found at D2648 to V2687. Phosphoserine is present on residues S2702 and S2709. Residues N2734, N2750, and N2767 are each glycosylated (N-linked (GlcNAc...) asparagine).

The protein belongs to the fibrillin family. As to quaternary structure, interacts with COL16A1. Interacts with integrin alpha-V/beta-3. Interacts with ADAMTS10; this interaction promotes microfibril assembly. Interacts with THSD4; this interaction promotes fibril formation. Interacts (via N-terminal domain) with FBLN2 and FBLN5. Interacts with ELN. Forms a ternary complex with ELN and FBLN2 or FBLN5 and a significant interaction with ELN seen only in the presence of FBLN2 or FBLN5. Interacts (via N-terminal domain) with LTBP2 (via C-terminal domain) in a Ca(+2)-dependent manner. Interacts (via N-terminal domain) with LTBP1 (via C-terminal domain). Interacts with integrins ITGA5:ITGB1, ITGAV:ITGB3 and ITGAV:ITGB6. Interacts (via N-terminal domain) with BMP2, BMP4, BMP7, BMP10 and GDF5. Interacts (via N-terminal domain) with MFAP2 and MFAP5. Interacts with ADAMTSL5. Interacts with MFAP4. Interacts (via N-terminal domain) with TNFSF11 in a Ca(+2)-dependent manner. Interacts (via N-terminal domain) with EFEMP2; this interaction inhibits EFEMP2 binding to LOX and ELN. In terms of processing, cleavage of N- and C-terminus by furin is required for incorporation into the extracellular matrix and assembly into microfibrils. The C-terminus, which corresponds to the Asprosin chain, was initially thought to constitute a propeptide. Fibrillin-1 and Asprosin chains are still linked together during the secretion from cells, but are subsequently separated by furin, an essential step for incorporation of Fibrillin-1 into the nascent microfibrils. Forms intermolecular disulfide bonds either with other fibrillin-1 molecules or with other components of the microfibrils. Post-translationally, O-glycosylated on serine residues by POGLUT2 and POGLUT3 which is necessary for efficient protein secretion.

Its subcellular location is the secreted. The protein resides in the extracellular space. It localises to the extracellular matrix. Structural component of the 10-12 nm diameter microfibrils of the extracellular matrix, which conveys both structural and regulatory properties to load-bearing connective tissues. Fibrillin-1-containing microfibrils provide long-term force bearing structural support. In tissues such as the lung, blood vessels and skin, microfibrils form the periphery of the elastic fiber, acting as a scaffold for the deposition of elastin. In addition, microfibrils can occur as elastin-independent networks in tissues such as the ciliary zonule, tendon, cornea and glomerulus where they provide tensile strength and have anchoring roles. Fibrillin-1 also plays a key role in tissue homeostasis through specific interactions with growth factors, such as the bone morphogenetic proteins (BMPs), growth and differentiation factors (GDFs) and latent transforming growth factor-beta-binding proteins (LTBPs), cell-surface integrins and other extracellular matrix protein and proteoglycan components. Regulates osteoblast maturation by controlling TGF-beta bioavailability and calibrating TGF-beta and BMP levels, respectively. Negatively regulates osteoclastogenesis by binding and sequestering an osteoclast differentiation and activation factor TNFSF11. This leads to disruption of TNFSF11-induced Ca(2+) signaling and impairment of TNFSF11-mediated nuclear translocation and activation of transcription factor NFATC1 which regulates genes important for osteoclast differentiation and function. Mediates cell adhesion via its binding to cell surface receptors integrins ITGAV:ITGB3 and ITGA5:ITGB1. Binds heparin and this interaction plays an important role in the assembly of microfibrils. Its function is as follows. Hormone that targets the liver to increase plasma glucose levels. Secreted by white adipose tissue and circulates in the plasma. Acts in response to fasting and promotes blood glucose elevation by binding to the surface of hepatocytes. Promotes hepatocyte glucose release by activating the protein kinase A activity in the liver, resulting in rapid glucose release into the circulation. This Bos taurus (Bovine) protein is Fibrillin-1.